A 168-amino-acid polypeptide reads, in one-letter code: MPITPLLHESVARFAATGADITTRAEPDLFVSIDPDHLRRILTAVLDNAITHGDGEIAVTAHARDGAVDIGVRDHGPGFADHFLPVAFDRFTRADTARGGRGSGLGLAIVAALTTTHGGHANATNHPDGGAELRITLPTPRPPFHEELPRITSSDTKDPNREHDTSDQ.

In terms of domain architecture, Histidine kinase; second part spans methionine 1 to arginine 141. The segment at leucine 137–glutamine 168 is disordered. Positions proline 143–glutamine 168 are enriched in basic and acidic residues.

Interacts with HK2.

The catalysed reaction is ATP + protein L-histidine = ADP + protein N-phospho-L-histidine.. Functionally, member of the three-protein two-component system HK1/HK2/TcrA. Kinase that binds ATP and catalyzes the transfer of a phosphoryl group from ATP to HK2. The polypeptide is Sensor histidine kinase component HK1 (Mycobacterium tuberculosis (strain ATCC 25618 / H37Rv)).